Consider the following 108-residue polypeptide: Peptidyl-prolyl cis-trans isomerase FKBP1A (108 aa).

The 89-residue stretch at Gly20 to Glu108 folds into the PPIase FKBP-type domain.

It belongs to the FKBP-type PPIase family. FKBP1 subfamily.

It is found in the cytoplasm. It carries out the reaction [protein]-peptidylproline (omega=180) = [protein]-peptidylproline (omega=0). Inhibited by both FK506 and rapamycin. Functionally, keeps in an inactive conformation TGFBR1, the TGF-beta type I serine/threonine kinase receptor, preventing TGF-beta receptor activation in absence of ligand. May modulate the RYR1 calcium channel activity. PPIases accelerate the folding of proteins. It catalyzes the cis-trans isomerization of proline imidic peptide bonds in oligopeptides. The chain is Peptidyl-prolyl cis-trans isomerase FKBP1A (fkbp1a) from Xenopus laevis (African clawed frog).